Consider the following 327-residue polypeptide: tRNA uridine(34) hydroxylase (327 aa).

The Rhodanese domain occupies 130–224 (LDEDTVVLDT…YGKDPEVQGE (95 aa)). Catalysis depends on Cys-184, which acts as the Cysteine persulfide intermediate.

The protein belongs to the TrhO family.

It catalyses the reaction uridine(34) in tRNA + AH2 + O2 = 5-hydroxyuridine(34) in tRNA + A + H2O. Its function is as follows. Catalyzes oxygen-dependent 5-hydroxyuridine (ho5U) modification at position 34 in tRNAs. The sequence is that of tRNA uridine(34) hydroxylase from Streptococcus thermophilus (strain CNRZ 1066).